Here is a 119-residue protein sequence, read N- to C-terminus: DNA-binding protein MMP0157 (119 aa).

Basic and acidic residues predominate over residues 1-12 (MNPEEIRQRRLQ). A disordered region spans residues 1–35 (MNPEEIRQRRLQEMQAKAQAQGAANDPEAQRQMQE).

It belongs to the PDCD5 family.

The polypeptide is DNA-binding protein MMP0157 (Methanococcus maripaludis (strain DSM 14266 / JCM 13030 / NBRC 101832 / S2 / LL)).